Here is a 676-residue protein sequence, read N- to C-terminus: DNA ligase (676 aa).

NAD(+) contacts are provided by residues 34–38 (DAEYD), 84–85 (SL), and Glu-116. The N6-AMP-lysine intermediate role is filled by Lys-118. NAD(+)-binding residues include Arg-139, Glu-174, Lys-294, and Lys-318. Zn(2+)-binding residues include Cys-412, Cys-415, Cys-428, and Cys-433. A BRCT domain is found at 589–676 (KGGEALKGLT…RTGKKAEELV (88 aa)).

This sequence belongs to the NAD-dependent DNA ligase family. LigA subfamily. The cofactor is Mg(2+). Requires Mn(2+) as cofactor.

It catalyses the reaction NAD(+) + (deoxyribonucleotide)n-3'-hydroxyl + 5'-phospho-(deoxyribonucleotide)m = (deoxyribonucleotide)n+m + AMP + beta-nicotinamide D-nucleotide.. Its function is as follows. DNA ligase that catalyzes the formation of phosphodiester linkages between 5'-phosphoryl and 3'-hydroxyl groups in double-stranded DNA using NAD as a coenzyme and as the energy source for the reaction. It is essential for DNA replication and repair of damaged DNA. In Thermus thermophilus (strain ATCC BAA-163 / DSM 7039 / HB27), this protein is DNA ligase.